We begin with the raw amino-acid sequence, 119 residues long: MARVKRGVTAHAKHKKVYKAAKGFRGRRKNTIRAAKAAVDKAGQYAFRDRKRKKRTFRALWIQRINAAVRPFGMTYSVFINGLSKSGIVVDRKVLSDLAITEPAAFQAIAEKAKAALAA.

Belongs to the bacterial ribosomal protein bL20 family.

Its function is as follows. Binds directly to 23S ribosomal RNA and is necessary for the in vitro assembly process of the 50S ribosomal subunit. It is not involved in the protein synthesizing functions of that subunit. The chain is Large ribosomal subunit protein bL20 from Rhodopseudomonas palustris (strain HaA2).